The following is a 459-amino-acid chain: Cysteine--tRNA ligase (459 aa).

Position 28 (Cys-28) interacts with Zn(2+). The 'HIGH' region signature appears at 30–40 (ITIYDLCHIGH). 3 residues coordinate Zn(2+): Cys-209, His-234, and Glu-238. The 'KMSKS' region signature appears at 266–270 (KMSKS). Lys-269 is a binding site for ATP.

This sequence belongs to the class-I aminoacyl-tRNA synthetase family. As to quaternary structure, monomer. Zn(2+) serves as cofactor.

It localises to the cytoplasm. The enzyme catalyses tRNA(Cys) + L-cysteine + ATP = L-cysteinyl-tRNA(Cys) + AMP + diphosphate. This is Cysteine--tRNA ligase from Shewanella sediminis (strain HAW-EB3).